A 342-amino-acid chain; its full sequence is MADTATTASAASAAASASNASSDAPPFQLGKPRFQQTSFYGRFRHFLDIIDPRTLFVTEKRLREAVQLLEDYKHGTLRPGVTNEQLWSAQKIKQAILHPDTNEKIFMPFRMSGYIPFGTPIVVGLLLPNQTLASTVFWQWLNQSHNACVNYANRNATKPSPASKFIQGYLGAVISAVSIAVGLNVLVQKANKFTPATRLLVQRFVPFPAVASANICNVVLMRYGELEEGIDVLDADGNLVGSSKIAARHALLETALTRVVLPMPILVLPPIVMSMLEKTALLQARPRLLLPVHSLVCLAAFGLALPLAISLFPQMSEIETSQLEPEIARATSSRTVVYNKGL.

The span at 1 to 24 (MADTATTASAASAAASASNASSDA) shows a compositional bias: low complexity. Positions 1-29 (MADTATTASAASAAASASNASSDAPPFQL) are disordered. 4 helical membrane-spanning segments follow: residues 105-125 (IFMP…VVGL), 165-185 (FIQG…GLNV), 256-276 (LTRV…MSML), and 289-309 (LLPV…PLAI).

The protein belongs to the sideroflexin family. As to expression, specifically expressed in the brain.

It localises to the mitochondrion inner membrane. It catalyses the reaction citrate(in) = citrate(out). Its function is as follows. Mitochondrial amino-acid transporter. Transports citrate. Does not act as a serine transporter: not able to mediate transport of serine into mitochondria. In brown adipose tissue, plays a role in the regulation of UCP1-dependent thermogenesis probably by supporting mitochondrial glycerol-3-phosphate utilization. The protein is Sideroflexin-5 of Rattus norvegicus (Rat).